A 254-amino-acid chain; its full sequence is Receptor expression-enhancing protein 2 (254 aa).

Transmembrane regions (helical) follow at residues 1 to 21 (MVSWIISRLVVLIFGTLYPAY) and 35 to 55 (YVKWMMYWIVFAFFTTAETLT). Residue serine 152 is modified to Phosphoserine. Positions 164-254 (ALPLQGPDGR…KKTSAGGDSA (91 aa)) are disordered. Polar residues predominate over residues 195-204 (SVRSGTNQAD). Residues 205 to 219 (PRTEISEDDTGDKAP) show a composition bias toward basic and acidic residues.

Belongs to the DP1 family. In terms of assembly, interacts with odorant receptor proteins.

The protein localises to the membrane. Its function is as follows. Required for endoplasmic reticulum (ER) network formation, shaping and remodeling. May enhance the cell surface expression of odorant receptors. The chain is Receptor expression-enhancing protein 2 (REEP2) from Bos taurus (Bovine).